The following is a 736-amino-acid chain: Phosphoribosylformylglycinamidine synthase subunit PurL (736 aa).

The active site involves His-48. Tyr-51 and Lys-90 together coordinate ATP. Glu-92 is a Mg(2+) binding site. Residues 93–96 (SHNH) and Arg-115 each bind substrate. The Proton acceptor role is filled by His-94. Asp-116 lines the Mg(2+) pocket. Gln-239 is a substrate binding site. Position 267 (Asp-267) interacts with Mg(2+). A substrate-binding site is contributed by 311-313 (ESQ). Positions 492 and 529 each coordinate ATP. Residue Asn-530 participates in Mg(2+) binding. Ser-532 provides a ligand contact to substrate.

This sequence belongs to the FGAMS family. As to quaternary structure, monomer. Part of the FGAM synthase complex composed of 1 PurL, 1 PurQ and 2 PurS subunits.

Its subcellular location is the cytoplasm. The enzyme catalyses N(2)-formyl-N(1)-(5-phospho-beta-D-ribosyl)glycinamide + L-glutamine + ATP + H2O = 2-formamido-N(1)-(5-O-phospho-beta-D-ribosyl)acetamidine + L-glutamate + ADP + phosphate + H(+). It participates in purine metabolism; IMP biosynthesis via de novo pathway; 5-amino-1-(5-phospho-D-ribosyl)imidazole from N(2)-formyl-N(1)-(5-phospho-D-ribosyl)glycinamide: step 1/2. Its function is as follows. Part of the phosphoribosylformylglycinamidine synthase complex involved in the purines biosynthetic pathway. Catalyzes the ATP-dependent conversion of formylglycinamide ribonucleotide (FGAR) and glutamine to yield formylglycinamidine ribonucleotide (FGAM) and glutamate. The FGAM synthase complex is composed of three subunits. PurQ produces an ammonia molecule by converting glutamine to glutamate. PurL transfers the ammonia molecule to FGAR to form FGAM in an ATP-dependent manner. PurS interacts with PurQ and PurL and is thought to assist in the transfer of the ammonia molecule from PurQ to PurL. The chain is Phosphoribosylformylglycinamidine synthase subunit PurL from Bradyrhizobium sp. (strain ORS 278).